Reading from the N-terminus, the 218-residue chain is 25.3 kDa vesicle transport protein SEC22-1 (218 aa).

The Cytoplasmic segment spans residues 1–192; the sequence is MVKMTLIARV…DKAKDLNRQA (192 aa). One can recognise a Longin domain in the interval 6–120; sequence LIARVTDGLP…YAFIKFDTFI (115 aa). The v-SNARE coiled-coil homology domain maps to 135-195; it reads NIAKLNDELY…KDLNRQALIR (61 aa). A helical; Anchor for type IV membrane protein membrane pass occupies residues 193 to 213; the sequence is LIRKWAPVAIVFGVVFLLFWV. Residues 214-218 are Vesicular-facing; it reads KNKLW.

Belongs to the synaptobrevin family. As to quaternary structure, interacts with SEC24A. Mainly expressed in flowers and siliques, to a lower extent in seedlings, and barely in roots and leaves.

It localises to the golgi apparatus membrane. The protein resides in the endoplasmic reticulum membrane. Functionally, V-SNARE involved in vesicle trafficking from the ER to the Golgi complex and required for early secretion. Involved in endoplasmic reticulum (ER) biogenesis and functions as well as for Golgi-stack integrity. Essential for gametophytes development. Involved in cesium Cs(+) accumulation, a non-essential cation. The polypeptide is 25.3 kDa vesicle transport protein SEC22-1 (Arabidopsis thaliana (Mouse-ear cress)).